A 32-amino-acid chain; its full sequence is Photosystem II reaction center protein T (32 aa).

A helical membrane pass occupies residues 3-23 (ALVYTFLLIGTLMVIFFAVFF).

This sequence belongs to the PsbT family. As to quaternary structure, PSII is composed of 1 copy each of membrane proteins PsbA, PsbB, PsbC, PsbD, PsbE, PsbF, PsbH, PsbI, PsbJ, PsbK, PsbL, PsbM, PsbT, PsbX, PsbY, PsbZ, Psb30/Ycf12, at least 3 peripheral proteins of the oxygen-evolving complex and a large number of cofactors. It forms dimeric complexes.

It localises to the plastid. The protein resides in the chloroplast thylakoid membrane. Functionally, found at the monomer-monomer interface of the photosystem II (PS II) dimer, plays a role in assembly and dimerization of PSII. PSII is a light-driven water plastoquinone oxidoreductase, using light energy to abstract electrons from H(2)O, generating a proton gradient subsequently used for ATP formation. The chain is Photosystem II reaction center protein T from Thalassiosira pseudonana (Marine diatom).